Reading from the N-terminus, the 502-residue chain is Lipoprotein LipO (502 aa).

Positions 1-21 (MKIRMRKKWMALPLAAMMIAG) are cleaved as a signal peptide. Cys22 carries N-palmitoyl cysteine lipidation. Cys22 carries S-diacylglycerol cysteine lipidation.

The protein localises to the cell membrane. The chain is Lipoprotein LipO (lipO) from Bacillus subtilis (strain 168).